The sequence spans 186 residues: Large ribosomal subunit protein uL6 (186 aa).

Belongs to the universal ribosomal protein uL6 family. In terms of assembly, part of the 50S ribosomal subunit.

Functionally, this protein binds to the 23S rRNA, and is important in its secondary structure. It is located near the subunit interface in the base of the L7/L12 stalk, and near the tRNA binding site of the peptidyltransferase center. The protein is Large ribosomal subunit protein uL6 of Sulfurisphaera tokodaii (strain DSM 16993 / JCM 10545 / NBRC 100140 / 7) (Sulfolobus tokodaii).